A 278-amino-acid polypeptide reads, in one-letter code: Octanoyltransferase LipM (278 aa).

Residues 33–248 (KKMPPTIRFY…GFEKGLDVEL (216 aa)) enclose the BPL/LPL catalytic domain. The Acyl-thioester intermediate role is filled by Cys-150.

Belongs to the octanoyltransferase LipM family. Monomer.

The catalysed reaction is octanoyl-[ACP] + L-lysyl-[protein] = N(6)-octanoyl-L-lysyl-[protein] + holo-[ACP] + H(+). The protein operates within protein modification; protein lipoylation via endogenous pathway; protein N(6)-(lipoyl)lysine from octanoyl-[acyl-carrier-protein]. Catalyzes the transfer of endogenously produced octanoic acid from octanoyl-acyl-carrier-protein onto the lipoyl domain of GcvH, an intermediate carrier during protein lipoylation. The chain is Octanoyltransferase LipM from Bacillus cereus (strain ATCC 14579 / DSM 31 / CCUG 7414 / JCM 2152 / NBRC 15305 / NCIMB 9373 / NCTC 2599 / NRRL B-3711).